We begin with the raw amino-acid sequence, 439 residues long: GTPase Der (439 aa).

2 consecutive EngA-type G domains span residues 4–169 (AMVS…PQEE) and 177–352 (IKIA…EEYN). Residues 10 to 17 (GRPNVGKS), 57 to 61 (DTGGL), 120 to 123 (NKVD), 183 to 190 (GKPNVGKS), 230 to 234 (DTAGI), and 295 to 298 (NKWD) each bind GTP. Positions 353–437 (KRITTGLLNN…PIVISTKKRG (85 aa)) constitute a KH-like domain.

It belongs to the TRAFAC class TrmE-Era-EngA-EngB-Septin-like GTPase superfamily. EngA (Der) GTPase family. Associates with the 50S ribosomal subunit.

GTPase that plays an essential role in the late steps of ribosome biogenesis. The sequence is that of GTPase Der from Thermoanaerobacter sp. (strain X514).